The primary structure comprises 217 residues: 3,4-dihydroxy-2-butanone 4-phosphate synthase (217 aa).

Residues 37 to 38 (RE), Asp42, 150 to 154 (RRGHT), and Glu174 contribute to the D-ribulose 5-phosphate site. A Mg(2+)-binding site is contributed by Glu38. Position 153 (His153) interacts with Mg(2+).

It belongs to the DHBP synthase family. Homodimer. The cofactor is Mg(2+). Mn(2+) is required as a cofactor.

The catalysed reaction is D-ribulose 5-phosphate = (2S)-2-hydroxy-3-oxobutyl phosphate + formate + H(+). It participates in cofactor biosynthesis; riboflavin biosynthesis; 2-hydroxy-3-oxobutyl phosphate from D-ribulose 5-phosphate: step 1/1. Functionally, catalyzes the conversion of D-ribulose 5-phosphate to formate and 3,4-dihydroxy-2-butanone 4-phosphate. In Shewanella woodyi (strain ATCC 51908 / MS32), this protein is 3,4-dihydroxy-2-butanone 4-phosphate synthase.